Reading from the N-terminus, the 143-residue chain is ATP synthase F(0) complex subunit C2, mitochondrial (143 aa).

The N-terminal 68 residues, 1–68 (MYTCAKFVST…RSFQTSAISR (68 aa)), are a transit peptide targeting the mitochondrion. The chain crosses the membrane as a helical span at residues 84–104 (VGVAGSGAGIGTVFGSLIIGY). N6,N6,N6-trimethyllysine is present on K111. The chain crosses the membrane as a helical span at residues 119–139 (ILGFALSEAMGLFCLMVAFLI).

It belongs to the ATPase C chain family. In terms of assembly, F-type ATPases have 2 components, CF(1) - the catalytic core - and CF(0) - the membrane proton channel. CF(1) has five subunits: alpha(3), beta(3), gamma(1), delta(1), epsilon(1). CF(0) has three main subunits: a, b and c. Interacts with DNAJC30; interaction is direct. Post-translationally, trimethylated by ATPSCKMT at Lys-111. Methylation is required for proper incorporation of the C subunit into the ATP synthase complex and mitochondrial respiration.

The protein localises to the mitochondrion membrane. Mitochondrial membrane ATP synthase (F(1)F(0) ATP synthase or Complex V) produces ATP from ADP in the presence of a proton gradient across the membrane which is generated by electron transport complexes of the respiratory chain. F-type ATPases consist of two structural domains, F(1) - containing the extramembraneous catalytic core and F(0) - containing the membrane proton channel, linked together by a central stalk and a peripheral stalk. During catalysis, ATP synthesis in the catalytic domain of F(1) is coupled via a rotary mechanism of the central stalk subunits to proton translocation. Part of the complex F(0) domain. A homomeric c-ring of probably 10 subunits is part of the complex rotary element. The protein is ATP synthase F(0) complex subunit C2, mitochondrial of Ovis aries (Sheep).